Reading from the N-terminus, the 167-residue chain is Transcription antitermination protein NusB (167 aa).

The interval 1-21 is disordered; the sequence is MIPTDTAPPSKPAQGHKGYKN.

Belongs to the NusB family.

Functionally, involved in transcription antitermination. Required for transcription of ribosomal RNA (rRNA) genes. Binds specifically to the boxA antiterminator sequence of the ribosomal RNA (rrn) operons. The protein is Transcription antitermination protein NusB of Nitrosomonas eutropha (strain DSM 101675 / C91 / Nm57).